A 98-amino-acid chain; its full sequence is NADH-ubiquinone oxidoreductase chain 4L (98 aa).

Transmembrane regions (helical) follow at residues 1–21 (MSMVHMNIMMAFAVSLVGLLM), 29–49 (SLLCLEGMMLSLFVMAALTIL), and 61–81 (IILLVFAACEAALGLSLLVMV).

The protein belongs to the complex I subunit 4L family. As to quaternary structure, core subunit of respiratory chain NADH dehydrogenase (Complex I) which is composed of 45 different subunits.

The protein resides in the mitochondrion inner membrane. It carries out the reaction a ubiquinone + NADH + 5 H(+)(in) = a ubiquinol + NAD(+) + 4 H(+)(out). Its function is as follows. Core subunit of the mitochondrial membrane respiratory chain NADH dehydrogenase (Complex I) which catalyzes electron transfer from NADH through the respiratory chain, using ubiquinone as an electron acceptor. Part of the enzyme membrane arm which is embedded in the lipid bilayer and involved in proton translocation. In Bos mutus grunniens (Wild yak), this protein is NADH-ubiquinone oxidoreductase chain 4L (MT-ND4L).